The following is a 298-amino-acid chain: N-acetylmuramic acid 6-phosphate etherase (298 aa).

The SIS domain maps to 54-217 (CISAIKNHGR…STVTMIKLGK (164 aa)). The active-site Proton donor is the E82. The active site involves E113.

It belongs to the GCKR-like family. MurNAc-6-P etherase subfamily. Homodimer.

The enzyme catalyses N-acetyl-D-muramate 6-phosphate + H2O = N-acetyl-D-glucosamine 6-phosphate + (R)-lactate. Its pathway is amino-sugar metabolism; N-acetylmuramate degradation. Specifically catalyzes the cleavage of the D-lactyl ether substituent of MurNAc 6-phosphate, producing GlcNAc 6-phosphate and D-lactate. The sequence is that of N-acetylmuramic acid 6-phosphate etherase from Petrotoga mobilis (strain DSM 10674 / SJ95).